The primary structure comprises 421 residues: Probable UDP-arabinose 4-epimerase 1 (421 aa).

The Cytoplasmic segment spans residues 1–33 (MLPTNRNRPQQRPARSWYFISDMDFSDPKRKPR). Residues 34–53 (YLSKILMVALLTAMCVVMLT) form a helical; Signal-anchor for type II membrane protein membrane-spanning segment. Residues 54-421 (QPPCHRRTPS…GYGPPQAMVL (368 aa)) lie on the Lumenal side of the membrane. Residue 74–105 (HVLVTGGAGYIGSHAALRLLKDSFRVTIVDNL) participates in NAD(+) binding. The active-site Proton acceptor is the tyrosine 222.

This sequence belongs to the NAD(P)-dependent epimerase/dehydratase family. The cofactor is NAD(+).

Its subcellular location is the golgi apparatus. The protein resides in the golgi stack membrane. It catalyses the reaction UDP-beta-L-arabinopyranose = UDP-alpha-D-xylose. Its pathway is nucleotide-sugar biosynthesis; UDP-L-arabinose biosynthesis; UDP-L-arabinose from UDP-alpha-D-xylose: step 1/1. It functions in the pathway cell wall biogenesis; cell wall polysaccharide biosynthesis. The sequence is that of Probable UDP-arabinose 4-epimerase 1 (UEL-1) from Oryza sativa subsp. japonica (Rice).